We begin with the raw amino-acid sequence, 597 residues long: Elongation factor 4 (597 aa).

Residues 2–184 form the tr-type G domain; that stretch reads KHIRNFSIIA…TIVKSIPAPE (183 aa). Residues 14-19 and 131-134 contribute to the GTP site; these read DHGKST and NKID.

This sequence belongs to the TRAFAC class translation factor GTPase superfamily. Classic translation factor GTPase family. LepA subfamily.

The protein localises to the cell inner membrane. The catalysed reaction is GTP + H2O = GDP + phosphate + H(+). Its function is as follows. Required for accurate and efficient protein synthesis under certain stress conditions. May act as a fidelity factor of the translation reaction, by catalyzing a one-codon backward translocation of tRNAs on improperly translocated ribosomes. Back-translocation proceeds from a post-translocation (POST) complex to a pre-translocation (PRE) complex, thus giving elongation factor G a second chance to translocate the tRNAs correctly. Binds to ribosomes in a GTP-dependent manner. The polypeptide is Elongation factor 4 (Aliivibrio fischeri (strain MJ11) (Vibrio fischeri)).